A 164-amino-acid polypeptide reads, in one-letter code: 4-hydroxy-4-methyl-2-oxoglutarate aldolase (164 aa).

Substrate-binding positions include 74 to 77 (GGNL) and R96. D97 lines the a divalent metal cation pocket.

This sequence belongs to the class II aldolase/RraA-like family. As to quaternary structure, homotrimer. It depends on Ni(2+) as a cofactor. Co(2+) serves as cofactor. Requires Zn(2+) as cofactor.

It catalyses the reaction 4-hydroxy-4-methyl-2-oxoglutarate = 2 pyruvate. The catalysed reaction is oxaloacetate + H(+) = pyruvate + CO2. With respect to regulation, competitively inhibited by oxalate, a pyruvate enolate analog. Catalyzes the aldol cleavage of 4-hydroxy-4-methyl-2-oxoglutarate (HMG) into 2 molecules of pyruvate. Also contains a secondary oxaloacetate (OAA) decarboxylase activity due to the common pyruvate enolate transition state formed following C-C bond cleavage in the retro-aldol and decarboxylation reactions. The chain is 4-hydroxy-4-methyl-2-oxoglutarate aldolase from Thermus thermophilus (strain ATCC 27634 / DSM 579 / HB8).